Reading from the N-terminus, the 305-residue chain is 4-diphosphocytidyl-2-C-methyl-D-erythritol kinase (305 aa).

Lysine 10 is a catalytic residue. 95 to 105 serves as a coordination point for ATP; sequence PVTAGLGGGSS. Aspartate 136 is an active-site residue. A disordered region spans residues 286–305; that stretch reads PGVTPWRSPRSASSPSTKRS. A compositionally biased stretch (low complexity) spans 290–305; the sequence is PWRSPRSASSPSTKRS.

The protein belongs to the GHMP kinase family. IspE subfamily.

It carries out the reaction 4-CDP-2-C-methyl-D-erythritol + ATP = 4-CDP-2-C-methyl-D-erythritol 2-phosphate + ADP + H(+). The protein operates within isoprenoid biosynthesis; isopentenyl diphosphate biosynthesis via DXP pathway; isopentenyl diphosphate from 1-deoxy-D-xylulose 5-phosphate: step 3/6. Its function is as follows. Catalyzes the phosphorylation of the position 2 hydroxy group of 4-diphosphocytidyl-2C-methyl-D-erythritol. This is 4-diphosphocytidyl-2-C-methyl-D-erythritol kinase from Anaeromyxobacter sp. (strain Fw109-5).